Reading from the N-terminus, the 618-residue chain is MSAGPQSDFDGKAFAAQLSTAPGVYRMYAGDDTLLYVGKAGALRKRVGSYFNGTPKNARLTSMLSQVARMDVTVTRSEAEALLLENQLIKSLSPRYNVSLRDDKSYPYVLLTREHWPRIALHRGPRAVQGRYFGPYTGVTGVRETLSLMHKLFKLRSCEDSVFRNRSRPCLQYQIGRCSGPCVDLVAAPDYAESVRRATMFLEGKSDQLGEEIMQSMQQASEALEFERAARLRDLLSSLRSMQNRQYVDGRAADLDVLACATQSSQACVLLLSFRDGRNLGTRSFFPKTNGEDSADEILGAFVSQYYAEHSPPREILLDREIPETELIEAALSTAAEHKVALKWNVRGERAGYLLLATRNAQLTLVTELTSQSAQHARSEALREMLGLAEPVKRVECFDISHTMGEATVASCVVFDASGPVRGQYRRFNISGITPGDDYAAMRQAIERRFRRAVEENGVLPDVLLIDGGAGQLAQAQAALADLGVENVWLVGVAKGEERRAGHEALIMADGRELRPGAASPALQFIQQVRDEAHRFAITGHRGRRQKARMTSKLEDIPGIGPRRRASLLKHFGGLVGLKAAGEAEIARVEGVNAALAARIYANLHGLALPDAAGESSP.

Positions 20-98 (TAPGVYRMYA…IKSLSPRYNV (79 aa)) constitute a GIY-YIG domain. Residues 207 to 242 (DQLGEEIMQSMQQASEALEFERAARLRDLLSSLRSM) enclose the UVR domain.

Belongs to the UvrC family. Interacts with UvrB in an incision complex.

The protein localises to the cytoplasm. Its function is as follows. The UvrABC repair system catalyzes the recognition and processing of DNA lesions. UvrC both incises the 5' and 3' sides of the lesion. The N-terminal half is responsible for the 3' incision and the C-terminal half is responsible for the 5' incision. This is UvrABC system protein C from Xanthomonas oryzae pv. oryzae (strain MAFF 311018).